Consider the following 174-residue polypeptide: Gamma-crystallin E (174 aa).

2 consecutive Beta/gamma crystallin 'Greek key' domains span residues 2 to 40 (GKIT…RVDS) and 41 to 83 (GCWM…RLIP). The interval 84-87 (HSSS) is connecting peptide. 2 Beta/gamma crystallin 'Greek key' domains span residues 88-128 (HRIK…HVME) and 129-171 (GYWV…RRIM).

This sequence belongs to the beta/gamma-crystallin family. As to expression, detected in the superior olivary complex of the auditory hindbrain.

Crystallins are the dominant structural components of the vertebrate eye lens. This Mus musculus (Mouse) protein is Gamma-crystallin E (Cryge).